The sequence spans 434 residues: F-box/LRR-repeat protein 21 (434 aa).

Positions 39–85 (RLDWGSLPHRVVLCVFQYLPLIDRARASSVCRRWNEVFHIPDLWRKF) constitute an F-box domain. 7 LRR repeats span residues 140-165 (LVNC…SKSH), 187-213 (DTPV…KMSS), 214-239 (CPHV…ALNY), 242-265 (LSDE…RIDV), 322-347 (GRSV…VVCA), 349-374 (GIQV…GLSE), and 375-400 (CEVS…SIME).

Part of the SCF (SKP1-CUL1-F-box) E3 ubiquitin-protein ligase complex SCF(FBXL21) composed of CUL1, SKP1, RBX1 and FBXL21. Interacts with CRY2. Interacts with CRY1. As to expression, expressed in the adenohypophysis, hypothalamus (especially in the suprachiasmatic nucleus or nuclei, SCN) and pineal, all neuroendocrine structures associated with timing and homeostasis.

It is found in the cytoplasm. The protein localises to the cytosol. Its subcellular location is the nucleus. It functions in the pathway protein modification; protein ubiquitination. Its function is as follows. Substrate-recognition component of the SCF(FBXL21) E3 ubiquitin ligase complex involved in circadian rhythm function. Plays a key role in the maintenance of both the speed and the robustness of the circadian clock oscillation. The SCF(FBXL21) complex mainly acts in the cytosol and mediates ubiquitination of CRY proteins (CRY1 and CRY2), leading to CRY proteins stabilization. The SCF(FBXL21) complex counteracts the activity of the SCF(FBXL3) complex and protects CRY proteins from degradation. Involved in the hypothalamic suprachiasmatic nucleus (SCN) clock regulating temporal organization of the daily activities. The sequence is that of F-box/LRR-repeat protein 21 (Fbxl21) from Ovis aries (Sheep).